Here is a 70-residue protein sequence, read N- to C-terminus: Protein tam14 (70 aa).

Residues 1–19 (MPTVQTPSQRRANTQFQKN) are compositionally biased toward polar residues. Residues 1–20 (MPTVQTPSQRRANTQFQKNI) are disordered. A helical membrane pass occupies residues 45–65 (IAMFFILLMSGGIILGILRFL).

The protein belongs to the RAMP4 family.

It localises to the membrane. It is found in the endoplasmic reticulum membrane. Functionally, interacts with target proteins during their translocation into the lumen of the endoplasmic reticulum. Protects unfolded target proteins against degradation during ER stress. May facilitate glycosylation of target proteins after termination of ER stress. This chain is Protein tam14 (tam14), found in Schizosaccharomyces pombe (strain 972 / ATCC 24843) (Fission yeast).